We begin with the raw amino-acid sequence, 292 residues long: Pyridoxal 5'-phosphate synthase subunit PdxS (292 aa).

D-ribose 5-phosphate is bound at residue Asp22. Lys79 serves as the catalytic Schiff-base intermediate with D-ribose 5-phosphate. Gly151 contributes to the D-ribose 5-phosphate binding site. Arg163 is a D-glyceraldehyde 3-phosphate binding site. D-ribose 5-phosphate-binding positions include Gly212 and 233 to 234; that span reads GS.

The protein belongs to the PdxS/SNZ family. In the presence of PdxT, forms a dodecamer of heterodimers.

It carries out the reaction aldehydo-D-ribose 5-phosphate + D-glyceraldehyde 3-phosphate + L-glutamine = pyridoxal 5'-phosphate + L-glutamate + phosphate + 3 H2O + H(+). The protein operates within cofactor biosynthesis; pyridoxal 5'-phosphate biosynthesis. Its function is as follows. Catalyzes the formation of pyridoxal 5'-phosphate from ribose 5-phosphate (RBP), glyceraldehyde 3-phosphate (G3P) and ammonia. The ammonia is provided by the PdxT subunit. Can also use ribulose 5-phosphate and dihydroxyacetone phosphate as substrates, resulting from enzyme-catalyzed isomerization of RBP and G3P, respectively. In Thermoanaerobacter sp. (strain X514), this protein is Pyridoxal 5'-phosphate synthase subunit PdxS.